Here is a 285-residue protein sequence, read N- to C-terminus: Phospholipid phosphatase 1 (285 aa).

Residues M1–R6 lie on the Cytoplasmic side of the membrane. The short motif at A5 to L7 is the PDZ-binding; involved in localization to the apical cell membrane element. The chain crosses the membrane as a helical span at residues L7–L27. The Extracellular portion of the chain corresponds to T28 to T53. A helical membrane pass occupies residues I54 to G74. Residues E75–Y94 lie on the Cytoplasmic side of the membrane. The helical transmembrane segment at I95–L115 threads the bilayer. The Extracellular portion of the chain corresponds to T116 to L165. Residues K120–P128 are phosphatase sequence motif I. N142 carries N-linked (GlcNAc...) asparagine glycosylation. Residues S166–L186 traverse the membrane as a helical segment. The phosphatase sequence motif II stretch occupies residues Y168–H171. Residue H171 is the Proton donors of the active site. Over Q187–R199 the chain is Cytoplasmic. The helical transmembrane segment at P200–D220 threads the bilayer. A phosphatase sequence motif III region spans residues S216–D227. The Extracellular portion of the chain corresponds to Y221–L229. The active-site Nucleophile is the H223. The helical transmembrane segment at T230–F250 threads the bilayer. The Cytoplasmic segment spans residues K251–P285. Residues R260–L269 are compositionally biased toward basic and acidic residues. Residues R260–P285 are disordered.

The protein belongs to the PA-phosphatase related phosphoesterase family. Forms functional homodimers and homooligomers that are not required for substrate recognition and catalytic activity. Can also form heterooligomers with PLPP2 and PLPP3. In terms of processing, N-glycosylated. N-linked sugars are of the complex type. N-glycosylation is not required for the phosphatase activity.

It localises to the cell membrane. The protein resides in the apical cell membrane. It is found in the membrane raft. The protein localises to the membrane. Its subcellular location is the caveola. The catalysed reaction is a 1,2-diacyl-sn-glycero-3-phosphate + H2O = a 1,2-diacyl-sn-glycerol + phosphate. The enzyme catalyses 1,2-dihexadecanoyl-sn-glycero-3-phosphate + H2O = 1,2-dihexadecanoyl-sn-glycerol + phosphate. It catalyses the reaction 1,2-di-(9Z-octadecenoyl)-sn-glycero-3-phosphate + H2O = 1,2-di-(9Z-octadecenoyl)-sn-glycerol + phosphate. It carries out the reaction a monoacyl-sn-glycero-3-phosphate + H2O = a monoacylglycerol + phosphate. The catalysed reaction is (9Z)-octadecenoyl-sn-glycero-3-phosphate + H2O = (9Z-octadecenoyl)-glycerol + phosphate. The enzyme catalyses a 1-acyl-sn-glycero-3-phosphate + H2O = a 1-acyl-sn-glycerol + phosphate. It catalyses the reaction 1-(9Z-octadecenoyl)-sn-glycero-3-phosphate + H2O = 1-(9Z-octadecenoyl)-sn-glycerol + phosphate. It carries out the reaction a 1,2-diacyl-sn-glycerol 3-diphosphate + H2O = a 1,2-diacyl-sn-glycero-3-phosphate + phosphate + H(+). The catalysed reaction is sphing-4-enine 1-phosphate + H2O = sphing-4-enine + phosphate. The enzyme catalyses an N-acylsphing-4-enine 1-phosphate + H2O = an N-acylsphing-4-enine + phosphate. It catalyses the reaction N-(octanoyl)-sphing-4-enine-1-phosphate + H2O = N-octanoylsphing-4-enine + phosphate. It carries out the reaction N-(9Z-octadecenoyl)-ethanolamine phosphate + H2O = N-(9Z-octadecenoyl) ethanolamine + phosphate. The catalysed reaction is 1-hexadecanoyl-2-(9Z-octadecenoyl)-sn-glycero-3-phosphate + H2O = 1-hexadecanoyl-2-(9Z-octadecenoyl)-sn-glycerol + phosphate. The protein operates within lipid metabolism; phospholipid metabolism. Magnesium-independent phospholipid phosphatase. Insensitive to N-ethylmaleimide. Functionally, magnesium-independent phospholipid phosphatase of the plasma membrane that catalyzes the dephosphorylation of a variety of glycerolipid and sphingolipid phosphate esters including phosphatidate/PA, lysophosphatidate/LPA, diacylglycerol pyrophosphate/DGPP, sphingosine 1-phosphate/S1P and ceramide 1-phosphate/C1P. Also acts on N-oleoyl ethanolamine phosphate/N-(9Z-octadecenoyl)-ethanolamine phosphate, a potential physiological compound. Through its extracellular phosphatase activity allows both the hydrolysis and the cellular uptake of these bioactive lipid mediators from the milieu, regulating signal transduction in different cellular processes. It is for instance essential for the extracellular hydrolysis of S1P and subsequent conversion into intracellular S1P. Involved in the regulation of inflammation, platelets activation, cell proliferation and migration among other processes. May also have an intracellular activity to regulate phospholipid-mediated signaling pathways. The polypeptide is Phospholipid phosphatase 1 (Cavia porcellus (Guinea pig)).